The following is a 206-amino-acid chain: Putative 3-methyladenine DNA glycosylase (206 aa).

The protein belongs to the DNA glycosylase MPG family.

This chain is Putative 3-methyladenine DNA glycosylase, found in Staphylococcus carnosus (strain TM300).